A 234-amino-acid polypeptide reads, in one-letter code: tRNA1(Val) (adenine(37)-N6)-methyltransferase (234 aa).

Belongs to the methyltransferase superfamily. tRNA (adenine-N(6)-)-methyltransferase family.

It is found in the cytoplasm. The catalysed reaction is adenosine(37) in tRNA1(Val) + S-adenosyl-L-methionine = N(6)-methyladenosine(37) in tRNA1(Val) + S-adenosyl-L-homocysteine + H(+). Functionally, specifically methylates the adenine in position 37 of tRNA(1)(Val) (anticodon cmo5UAC). The polypeptide is tRNA1(Val) (adenine(37)-N6)-methyltransferase (Aliivibrio fischeri (strain ATCC 700601 / ES114) (Vibrio fischeri)).